Here is a 73-residue protein sequence, read N- to C-terminus: UPF0154 protein BcerKBAB4_3367 (73 aa).

Residues 4–24 (WLGILVGVVALVAGVALGFFI) traverse the membrane as a helical segment.

Belongs to the UPF0154 family.

The protein resides in the cell membrane. This is UPF0154 protein BcerKBAB4_3367 from Bacillus mycoides (strain KBAB4) (Bacillus weihenstephanensis).